The following is a 635-amino-acid chain: Threonine--tRNA ligase (635 aa).

The TGS domain maps to 1–61 (MIKITLKDGS…ENDCTLNLLT (61 aa)). The tract at residues 242 to 532 (DHRKLGRELD…LTEHYAGAFP (291 aa)) is catalytic. Residues Cys333, His384, and His509 each coordinate Zn(2+).

It belongs to the class-II aminoacyl-tRNA synthetase family. Homodimer. Zn(2+) serves as cofactor.

It is found in the cytoplasm. It catalyses the reaction tRNA(Thr) + L-threonine + ATP = L-threonyl-tRNA(Thr) + AMP + diphosphate + H(+). Catalyzes the attachment of threonine to tRNA(Thr) in a two-step reaction: L-threonine is first activated by ATP to form Thr-AMP and then transferred to the acceptor end of tRNA(Thr). Also edits incorrectly charged L-seryl-tRNA(Thr). The sequence is that of Threonine--tRNA ligase from Acetivibrio thermocellus (strain ATCC 27405 / DSM 1237 / JCM 9322 / NBRC 103400 / NCIMB 10682 / NRRL B-4536 / VPI 7372) (Clostridium thermocellum).